The following is a 277-amino-acid chain: NH(3)-dependent NAD(+) synthetase (277 aa).

36 to 43 (GLSGGIDS) provides a ligand contact to ATP. Asp-42 contributes to the Mg(2+) binding site. Arg-118 contributes to the deamido-NAD(+) binding site. ATP is bound at residue Thr-138. Glu-143 serves as a coordination point for Mg(2+). Positions 167 and 189 each coordinate ATP.

It belongs to the NAD synthetase family. In terms of assembly, homodimer.

It carries out the reaction deamido-NAD(+) + NH4(+) + ATP = AMP + diphosphate + NAD(+) + H(+). The protein operates within cofactor biosynthesis; NAD(+) biosynthesis; NAD(+) from deamido-NAD(+) (ammonia route): step 1/1. Functionally, catalyzes the ATP-dependent amidation of deamido-NAD to form NAD. Uses ammonia as a nitrogen source. The protein is NH(3)-dependent NAD(+) synthetase of Chlorobaculum tepidum (strain ATCC 49652 / DSM 12025 / NBRC 103806 / TLS) (Chlorobium tepidum).